Here is a 577-residue protein sequence, read N- to C-terminus: MALLWLLSVFLLVPGTQGTEDGDMRLVNGASANEGRVEIFYRGRWGTVCDNLWNLLDAHVVCRALGYENATQALGRAAFGPGKGPIMLDEVECTGTESSLASCRSLGWMVSRCGHEKDAGVVCSNDTTGLHILDLSGELSDALGQIFDSQQGCDLFIQVTGQGYEDLSLCAHTLILRTNPEAQALWQVVGSSVIMRVDAECMPVVRDFLRYFYSRRIEVSMSSVKCLHKLASAYGATELQDYCGRLFATLLPQDPTFHTPLDLYAYARATGDSMLEDLCVQFLAWNFEPLTQSESWSAVPTTLIQALLPKSELAVSSELDLLKAVDQWSTETIASHEDIERLVEQVRFPMMLPQELFELQFNLSLYQDHQALFQRKTMQALEFHTVPVEVLAKYKGLNLTEDTYKPRLYTSSTWSSLVMASTWRAQRYEYNRYNQLYTYGYGSVARYNSYQSFQTPQHPSFLFKDKQISWSATYLPTMQSCWNYGFSCTSNELPVLGLTTSSYSNPTIGYENRVLILCGGYSVVDVTSFEGSKAPIPTALDTNSSKTPSLFPCASGAFSSFRVVIRPFYLTNSTDMV.

The signal sequence occupies residues 1-18 (MALLWLLSVFLLVPGTQG). Residues 24–124 (MRLVNGASAN…HEKDAGVVCS (101 aa)) enclose the SRCR domain. 3 cysteine pairs are disulfide-bonded: cysteine 49/cysteine 113, cysteine 62/cysteine 123, and cysteine 93/cysteine 103. Asparagine 69 carries N-linked (GlcNAc...) asparagine glycosylation. The N-linked (GlcNAc...) asparagine glycan is linked to asparagine 125. The region spanning 153-221 (CDLFIQVTGQ…FYSRRIEVSM (69 aa)) is the BTB domain. The 101-residue stretch at 260 to 360 (PLDLYAYARA…MLPQELFELQ (101 aa)) folds into the BACK domain. Residues asparagine 362, asparagine 398, asparagine 543, and asparagine 572 are each glycosylated (N-linked (GlcNAc...) asparagine).

In terms of assembly, homodimers and homomultimers. The multimers form ring-like structures with a diameter of 30-40 nm. Binds LGALS1 and LGALS3. Binds ITGB1, COL4A1, COL5A1, COL6A1, FN1 and NID. Interacts with PPIC (in vitro). The unglycosylated form interacts with PDE4DIP isoform 2/MMG8/SMYLE; this interaction may connect a pericentrosomal complex to the gamma-tubulin ring complex (gamma-TuRC) to promote microtubule assembly and acetylation. Post-translationally, N-glycosylated. In terms of tissue distribution, detected in embryo, liver, spleen, kidney, lung, heart, intestine, thymus and lymph node.

It localises to the secreted. It is found in the extracellular space. The protein localises to the extracellular matrix. Its function is as follows. Promotes integrin-mediated cell adhesion. May stimulate host defense against viruses and tumor cells. The chain is Galectin-3-binding protein (Lgals3bp) from Mus musculus (Mouse).